An 85-amino-acid polypeptide reads, in one-letter code: Toxin BmKaTX15 (85 aa).

The first 19 residues, 1-19, serve as a signal peptide directing secretion; the sequence is MNYLVFFSLALLVMTGVES. Residues 21 to 83 enclose the LCN-type CS-alpha/beta domain; sequence RDGYIADDKN…VPIRVPGKCN (63 aa). 4 cysteine pairs are disulfide-bonded: Cys-31–Cys-82, Cys-35–Cys-55, Cys-41–Cys-65, and Cys-45–Cys-67.

This sequence belongs to the long (4 C-C) scorpion toxin superfamily. Sodium channel inhibitor family. Alpha subfamily. Expressed by the venom gland.

Its subcellular location is the secreted. Alpha toxins bind voltage-independently at site-3 of sodium channels (Nav) and inhibit the inactivation of the activated channels, thereby blocking neuronal transmission. This chain is Toxin BmKaTX15, found in Olivierus martensii (Manchurian scorpion).